We begin with the raw amino-acid sequence, 312 residues long: Dehydrogenase/reductase SDR family member 7C (312 aa).

The signal sequence occupies residues 1–18 (MGVMAMLMLPLLLLGISG). S47, L49, Y192, K196, and S227 together coordinate NAD(+). Catalysis depends on Y192, which acts as the Proton acceptor.

This sequence belongs to the short-chain dehydrogenases/reductases (SDR) family.

It localises to the sarcoplasmic reticulum membrane. The enzyme catalyses all-trans-retinol + NAD(+) = all-trans-retinal + NADH + H(+). Functionally, NADH-dependent oxidoreductase which catalyzes the oxidation of all-trans-retinol to all-trans-retinal. Plays a role in the regulation of cardiac and skeletal muscle metabolic functions. Maintains Ca(2+) intracellular homeostasis by repressing Ca(2+) release from the sarcoplasmic reticulum (SR) in myotubes, possibly through local alternations in NAD/NADH or retinol/retinal. Also plays a role in Ca(2+) homeostasis by controlling Ca(2+) overload in the cytosol and the SR in myotubes. Involved in glucose uptake into skeletal muscles and muscle performance by activating PI3K and mTORC2-mediated AKT1 phosphorylation signaling pathways, possibly through the action of its downstream catalytic product all-trans-retinoic acid. This is Dehydrogenase/reductase SDR family member 7C from Homo sapiens (Human).